The chain runs to 486 residues: Probable glycine dehydrogenase (decarboxylating) subunit 2 (486 aa).

The interval 1–26 is disordered; it reads MLIFESSRPGRQARAQAPKPTAATND. K264 carries the N6-(pyridoxal phosphate)lysine modification.

This sequence belongs to the GcvP family. C-terminal subunit subfamily. The glycine cleavage system is composed of four proteins: P, T, L and H. In this organism, the P 'protein' is a heterodimer of two subunits. The cofactor is pyridoxal 5'-phosphate.

The catalysed reaction is N(6)-[(R)-lipoyl]-L-lysyl-[glycine-cleavage complex H protein] + glycine + H(+) = N(6)-[(R)-S(8)-aminomethyldihydrolipoyl]-L-lysyl-[glycine-cleavage complex H protein] + CO2. Functionally, the glycine cleavage system catalyzes the degradation of glycine. The P protein binds the alpha-amino group of glycine through its pyridoxal phosphate cofactor; CO(2) is released and the remaining methylamine moiety is then transferred to the lipoamide cofactor of the H protein. This chain is Probable glycine dehydrogenase (decarboxylating) subunit 2, found in Nitrosococcus oceani (strain ATCC 19707 / BCRC 17464 / JCM 30415 / NCIMB 11848 / C-107).